A 360-amino-acid chain; its full sequence is MGSLEAERKTTGWAARDPSGVLSPYTYTLRETGPEDVFIKIIYCGICHTDIHQIKNDLGASNYPMVPGHEVVGEVVEVGSDVTKFKVGDCVGDGTIVGCCKTCRPCKADVEQYCNKKIWSYNDVYTDGKPTQGGFSGHMVVDQKFVVKIPDGMAPEQAAPLLCAGVTVYSPLTHFGLKEISGLRGGILGLGGVGHMGVKLAKAMGHHVTVISSSDKKKEEAIDHLGADAYLVSSDATQMQEAADSLDYIIDTVPVFHPLEPYLSLLKLDGKLILMGVINTPLQFISPMVMLGRKAITGSFIGSMKETEEMLDFCNEKGITSTIEVVKMDYINTAFERLEKNDVRYRFVVDVAGSKLDQET.

C47 serves as a coordination point for Zn(2+). Residue T49 participates in NADP(+) binding. Residues H69, E70, C100, C103, C106, C114, and C163 each contribute to the Zn(2+) site. Residues T167, 189-194 (GLGGVG), 212-217 (SSSDKK), T252, G276, and 299-301 (SFI) contribute to the NADP(+) site.

Belongs to the zinc-containing alcohol dehydrogenase family. In terms of assembly, homodimer. The cofactor is Zn(2+).

It catalyses the reaction (E)-cinnamyl alcohol + NADP(+) = (E)-cinnamaldehyde + NADPH + H(+). The catalysed reaction is (E)-coniferol + NADP(+) = (E)-coniferaldehyde + NADPH + H(+). The enzyme catalyses (E)-sinapyl alcohol + NADP(+) = (E)-sinapaldehyde + NADPH + H(+). It carries out the reaction (E)-4-coumaroyl alcohol + NADP(+) = (E)-4-coumaraldehyde + NADPH + H(+). It catalyses the reaction (E)-caffeyl alcohol + NADP(+) = (E)-caffeyl aldehyde + NADPH + H(+). It functions in the pathway aromatic compound metabolism; phenylpropanoid biosynthesis. Functionally, involved in lignin biosynthesis. Catalyzes the final step specific for the production of lignin monomers. Catalyzes the NADPH-dependent reduction of coniferaldehyde, 5-hydroxyconiferaldehyde, sinapaldehyde, 4-coumaraldehyde and caffeyl aldehyde to their respective alcohols. The chain is Probable cinnamyl alcohol dehydrogenase 1 (CAD1) from Aralia cordata (Udo).